A 198-amino-acid chain; its full sequence is Alpha1-proteinase inhibitor-degradation deficient protein 37 (198 aa).

S79 is subject to Phosphoserine.

It is found in the cytoplasm. Functionally, involved in ER-associated protein degradation (ERAD). The protein is Alpha1-proteinase inhibitor-degradation deficient protein 37 (ADD37) of Saccharomyces cerevisiae (strain ATCC 204508 / S288c) (Baker's yeast).